Reading from the N-terminus, the 82-residue chain is DNA-directed RNA polymerase subunit omega (82 aa).

This sequence belongs to the RNA polymerase subunit omega family. As to quaternary structure, in cyanobacteria the RNAP catalytic core is composed of 2 alpha, 1 beta, 1 beta', 1 gamma and 1 omega subunit. When a sigma factor is associated with the core the holoenzyme is formed, which can initiate transcription.

The catalysed reaction is RNA(n) + a ribonucleoside 5'-triphosphate = RNA(n+1) + diphosphate. Functionally, promotes RNA polymerase assembly. Latches the N- and C-terminal regions of the beta' subunit thereby facilitating its interaction with the beta and alpha subunits. This chain is DNA-directed RNA polymerase subunit omega, found in Trichodesmium erythraeum (strain IMS101).